Consider the following 373-residue polypeptide: Putative aminopeptidase SgcX (373 aa).

A divalent metal cation contacts are provided by H67 and D180. Catalysis depends on E212, which acts as the Proton acceptor. A divalent metal cation is bound by residues E213, D235, and H329.

This sequence belongs to the peptidase M42 family. The cofactor is a divalent metal cation.

The polypeptide is Putative aminopeptidase SgcX (sgcX) (Escherichia coli (strain K12)).